The chain runs to 707 residues: Protein SGM1 (707 aa).

Residues 1–11 (MSKKLSLEERL) are compositionally biased toward basic and acidic residues. Residues 1 to 52 (MSKKLSLEERLSLATKKGRKKNKRSTSNLSSPSPVVLSNNEQESARTSIDDA) form a disordered region. Ser2 carries the post-translational modification N-acetylserine. Residues 27 to 40 (SNLSSPSPVVLSNN) show a composition bias toward low complexity. Residues 122-473 (VEELVKEISP…KPHQENSNEK (352 aa)) are a coiled coil. A phosphoserine mark is found at Ser151, Ser538, Ser549, Ser568, Ser571, Ser576, and Ser589. Residues 594–706 (SAHLVNKLST…QQMVEMQGKM (113 aa)) adopt a coiled-coil conformation.

It belongs to the SGM1 family. Interacts with YPT6.

The protein localises to the golgi apparatus. Required for normal growth rate on galactose and mannose. This is Protein SGM1 (SGM1) from Saccharomyces cerevisiae (strain ATCC 204508 / S288c) (Baker's yeast).